Here is a 303-residue protein sequence, read N- to C-terminus: HTH-type transcriptional regulator YjiE (303 aa).

The HTH lysR-type domain occupies Ile11–Ser68. A DNA-binding region (H-T-H motif) is located at residues Phe28–Arg47.

The protein belongs to the LysR transcriptional regulatory family. Forms dimers, tetramers and possibly dodecameric complexes; oligomerization may be governed by cellular concentrations. DNA-binding seems to decrease oligomerization.

In terms of biological role, protects cells from HOCl (hypochlorite) stress but not peroxide or diamide stress. Decreases the intracellular load of reactive oxygen species by up-regulating genes involved in methionine and cysteine biosynthesis and down-regulating Fur-regulated genes involved in iron acquisition. Has also been suggested to down-regulate expression of the flagellar regulon, decreasing motility, but this activity was not confirmed in a second study. This Escherichia coli (strain K12) protein is HTH-type transcriptional regulator YjiE (yjiE).